A 494-amino-acid polypeptide reads, in one-letter code: Amidophosphoribosyltransferase (494 aa).

Residues 1 to 10 (MFNYSGLNEE) constitute a propeptide that is removed on maturation. Residue Cys11 is the Nucleophile of the active site. A Glutamine amidotransferase type-2 domain is found at 11–231 (CGVFGIWNHP…AGEYVVINDK (221 aa)). Positions 294, 356, and 357 each coordinate Mg(2+).

It in the C-terminal section; belongs to the purine/pyrimidine phosphoribosyltransferase family. Mg(2+) is required as a cofactor.

It catalyses the reaction 5-phospho-beta-D-ribosylamine + L-glutamate + diphosphate = 5-phospho-alpha-D-ribose 1-diphosphate + L-glutamine + H2O. Its pathway is purine metabolism; IMP biosynthesis via de novo pathway; N(1)-(5-phospho-D-ribosyl)glycinamide from 5-phospho-alpha-D-ribose 1-diphosphate: step 1/2. Functionally, catalyzes the formation of phosphoribosylamine from phosphoribosylpyrophosphate (PRPP) and glutamine. This is Amidophosphoribosyltransferase from Staphylococcus aureus (strain Mu50 / ATCC 700699).